A 103-amino-acid chain; its full sequence is ATP-dependent Clp protease adapter protein ClpS (103 aa).

It belongs to the ClpS family. Binds to the N-terminal domain of the chaperone ClpA.

Functionally, involved in the modulation of the specificity of the ClpAP-mediated ATP-dependent protein degradation. This is ATP-dependent Clp protease adapter protein ClpS from Nitrosomonas eutropha (strain DSM 101675 / C91 / Nm57).